A 339-amino-acid chain; its full sequence is Tetraacyldisaccharide 4'-kinase (339 aa).

Residue 62–69 (VAGGTGKT) coordinates ATP.

It belongs to the LpxK family.

The enzyme catalyses a lipid A disaccharide + ATP = a lipid IVA + ADP + H(+). Its pathway is glycolipid biosynthesis; lipid IV(A) biosynthesis; lipid IV(A) from (3R)-3-hydroxytetradecanoyl-[acyl-carrier-protein] and UDP-N-acetyl-alpha-D-glucosamine: step 6/6. Its function is as follows. Transfers the gamma-phosphate of ATP to the 4'-position of a tetraacyldisaccharide 1-phosphate intermediate (termed DS-1-P) to form tetraacyldisaccharide 1,4'-bis-phosphate (lipid IVA). The polypeptide is Tetraacyldisaccharide 4'-kinase (Xylella fastidiosa (strain M12)).